We begin with the raw amino-acid sequence, 498 residues long: RuvB-like helicase 2 (498 aa).

79-86 (GPPSTGKT) is a binding site for ATP. Positions 458–498 (VTIGQESTDGSTQPQAKQQEVAQPEATQPQSQPEDDKMETD) are disordered. Positions 461–489 (GQESTDGSTQPQAKQQEVAQPEATQPQSQ) are enriched in polar residues.

This sequence belongs to the RuvB family. May form heterododecamers with RVB1. Component of the SWR1 chromatin remodeling complex, the INO80 chromatin remodeling complex, and of the R2TP complex.

The protein resides in the nucleus. The enzyme catalyses ATP + H2O = ADP + phosphate + H(+). Functionally, DNA helicase which participates in several chromatin remodeling complexes, including the SWR1 and the INO80 complexes. The SWR1 complex mediates the ATP-dependent exchange of histone H2A for the H2A variant HZT1 leading to transcriptional regulation of selected genes by chromatin remodeling. The INO80 complex remodels chromatin by shifting nucleosomes and is involved in DNA repair. Also involved in pre-rRNA processing. In Candida albicans (strain SC5314 / ATCC MYA-2876) (Yeast), this protein is RuvB-like helicase 2 (RVB2).